Reading from the N-terminus, the 384-residue chain is UDP-N-acetylglucosamine--N-acetylmuramyl-(pentapeptide) pyrophosphoryl-undecaprenol N-acetylglucosamine transferase (384 aa).

Residues 22 to 24 (TGG), R179, S209, and Q312 contribute to the UDP-N-acetyl-alpha-D-glucosamine site.

It belongs to the glycosyltransferase 28 family. MurG subfamily.

Its subcellular location is the cell inner membrane. It carries out the reaction di-trans,octa-cis-undecaprenyl diphospho-N-acetyl-alpha-D-muramoyl-L-alanyl-D-glutamyl-meso-2,6-diaminopimeloyl-D-alanyl-D-alanine + UDP-N-acetyl-alpha-D-glucosamine = di-trans,octa-cis-undecaprenyl diphospho-[N-acetyl-alpha-D-glucosaminyl-(1-&gt;4)]-N-acetyl-alpha-D-muramoyl-L-alanyl-D-glutamyl-meso-2,6-diaminopimeloyl-D-alanyl-D-alanine + UDP + H(+). It participates in cell wall biogenesis; peptidoglycan biosynthesis. In terms of biological role, cell wall formation. Catalyzes the transfer of a GlcNAc subunit on undecaprenyl-pyrophosphoryl-MurNAc-pentapeptide (lipid intermediate I) to form undecaprenyl-pyrophosphoryl-MurNAc-(pentapeptide)GlcNAc (lipid intermediate II). The sequence is that of UDP-N-acetylglucosamine--N-acetylmuramyl-(pentapeptide) pyrophosphoryl-undecaprenol N-acetylglucosamine transferase from Treponema pallidum (strain Nichols).